The primary structure comprises 852 residues: MFWKFDLHSSSHIDTLLERDEVTLKELMDEEDILQECKAQNRKLVEFLLKAECLEDLVTFITEEPPQDMDEKIRYKYPNLSCELLTSDVSQINDRLGEDESLLKRLYAFLLNDPPLNPLLASFFSKVLSILISRKPEQIVAFLKQKDDFVNLIIKHIGTSAIMDLLLRLLTCIEPPQLRQDVLNWLNEEKIIQRLVEIVHPSQDEDRHSNASQSLCEIIRLSRDQMLQVQNSSEPDPLLATLEKKEILEQLLSNIFLKEKNESAIVSAIQILLTLLETRRPAFEGHIDLCPPGVNYSAFSVNKNVLAAIQERLPSFHQLLLDPPKTGVMKTTWGILDPPVGNTRLNVIRLIASLLQTNTHSINEELIELNTMGVILDMFFKYSWNNFLHTQVEICLALILASPGDSPEHSTISEQNSTGDHVLLKHLFLKCHLIDRILEAWAMNEKRQSEGGQRYGYMGHLTRIANCIVHSIEKGPNSVLAHQLIKDLPTDAQERWETFCTSSLGETNKRNTVDLVTTRHIHSSSDDEIEFKDPGFSQDSAIQQFGFNDEKFADQDDIGNVSFDRVSDINFSLNANESANIALFEACCKERIQQFDDGGSDEEDIWEEKNIAFPQETQRRSSSGSTDSEESTDSEEEETVKQGLFESSTVNHEDKMEVDANEASNWTANFDIPMETAHVASLDSVGSDAWSTEEPLSSKETGWASFSEFTSPINTKETIRSSSPVEMETSTEPVDPLSVNASAQTEVTVAMDAVSDGDEEGENADQMTETVMNGSMKETLSLTVDAKTETAVFKSEEGKLTTSHDSACKYGVVENFDSAMENAPPTQPSSSSQEQRTSEQIVLDGASANGPV.

Disordered stretches follow at residues 610–653, 714–742, and 817–852; these read NIAF…VNHE, NTKE…VNAS, and DSAM…NGPV. Positions 627 to 638 are enriched in acidic residues; sequence DSEESTDSEEEE. Residues 714–732 show a composition bias toward polar residues; the sequence is NTKETIRSSSPVEMETSTE. A compositionally biased stretch (low complexity) spans 828 to 840; it reads PSSSSQEQRTSEQ.

It belongs to the SAPS family.

Functionally, regulatory subunit of protein phosphatase 6 (PP6). May function as a scaffolding PP6 subunit. The sequence is that of Serine/threonine-protein phosphatase 6 regulatory subunit 3-A (ppp6r3-a) from Xenopus laevis (African clawed frog).